The primary structure comprises 28 residues: ALWKNMLKGIGKLAGQAALGAVKTLVGA.

In terms of tissue distribution, expressed by the skin glands.

The protein resides in the secreted. Its function is as follows. Has antimicrobial activity. The sequence is that of Dermaseptin-6TR from Phyllomedusa trinitatis (Trinidad leaf frog).